Consider the following 865-residue polypeptide: Alanine--tRNA ligase (865 aa).

Residues histidine 554, histidine 558, cysteine 656, and histidine 660 each coordinate Zn(2+).

The protein belongs to the class-II aminoacyl-tRNA synthetase family. It depends on Zn(2+) as a cofactor.

Its subcellular location is the cytoplasm. The catalysed reaction is tRNA(Ala) + L-alanine + ATP = L-alanyl-tRNA(Ala) + AMP + diphosphate. In terms of biological role, catalyzes the attachment of alanine to tRNA(Ala) in a two-step reaction: alanine is first activated by ATP to form Ala-AMP and then transferred to the acceptor end of tRNA(Ala). Also edits incorrectly charged Ser-tRNA(Ala) and Gly-tRNA(Ala) via its editing domain. This chain is Alanine--tRNA ligase, found in Idiomarina loihiensis (strain ATCC BAA-735 / DSM 15497 / L2-TR).